Consider the following 139-residue polypeptide: ATP synthase epsilon chain, chloroplastic (139 aa).

Belongs to the ATPase epsilon chain family. As to quaternary structure, F-type ATPases have 2 components, CF(1) - the catalytic core - and CF(0) - the membrane proton channel. CF(1) has five subunits: alpha(3), beta(3), gamma(1), delta(1), epsilon(1). CF(0) has three main subunits: a, b and c.

Its subcellular location is the plastid. The protein localises to the chloroplast thylakoid membrane. Produces ATP from ADP in the presence of a proton gradient across the membrane. The polypeptide is ATP synthase epsilon chain, chloroplastic (Dictyota dichotoma).